Here is a 314-residue protein sequence, read N- to C-terminus: Olfactory receptor 10A6 (314 aa).

Over 1-25 (MERQNQSCVVEFILLGFSNYPELQG) the chain is Extracellular. The N-linked (GlcNAc...) asparagine glycan is linked to N5. The helical transmembrane segment at 26-46 (QLFVAFLVIYLVTLIGNAIII) threads the bilayer. Residues 47–54 (VIVSLDQS) lie on the Cytoplasmic side of the membrane. A helical transmembrane segment spans residues 55–75 (LHVPMYLFLLNLSVVDLSFSA). Over 76–99 (VIMPEMLVVLSTEKTTISFGGCFA) the chain is Extracellular. C97 and C189 are disulfide-bonded. The chain crosses the membrane as a helical span at residues 100 to 120 (QMYFILLFGGAECFLLGAMAY). At 121–139 (DRFAAICHPLNYQMIMNKG) the chain is on the cytoplasmic side. A helical transmembrane segment spans residues 140–160 (VFMKLIIFSWALGFMLGTVQT). Topologically, residues 161–197 (SWVSSFPFCGLNEINHISCETPAVLELACADTFLFEI) are extracellular. The chain crosses the membrane as a helical span at residues 198–217 (YAFTGTFLIILVPFLLILLS). The Cytoplasmic segment spans residues 218–237 (YIRVLFAILKMPSTTGRQKA). Residues 238–258 (FSTCAAHLTSVTLFYGTASMT) form a helical membrane-spanning segment. Residues 259-271 (YLQPKSGYSPETK) lie on the Extracellular side of the membrane. A helical transmembrane segment spans residues 272–292 (KVMSLSYSLLTPLLNLLIYSL). Residues 293 to 314 (RNSEMKRALMKLWRRRVVLHTI) lie on the Cytoplasmic side of the membrane.

This sequence belongs to the G-protein coupled receptor 1 family.

It is found in the cell membrane. Its function is as follows. Odorant receptor. This is Olfactory receptor 10A6 (OR10A6) from Homo sapiens (Human).